Here is a 381-residue protein sequence, read N- to C-terminus: N-acetyldiaminopimelate deacetylase (381 aa).

D71 is an active-site residue. E130 serves as the catalytic Proton acceptor.

This sequence belongs to the peptidase M20A family. N-acetyldiaminopimelate deacetylase subfamily.

The catalysed reaction is N-acetyl-(2S,6S)-2,6-diaminopimelate + H2O = (2S,6S)-2,6-diaminopimelate + acetate. It participates in amino-acid biosynthesis; L-lysine biosynthesis via DAP pathway; LL-2,6-diaminopimelate from (S)-tetrahydrodipicolinate (acetylase route): step 3/3. Functionally, catalyzes the conversion of N-acetyl-diaminopimelate to diaminopimelate and acetate. This Ligilactobacillus salivarius (strain UCC118) (Lactobacillus salivarius) protein is N-acetyldiaminopimelate deacetylase.